Reading from the N-terminus, the 477-residue chain is 3-isopropylmalate dehydratase large subunit (477 aa).

Positions 352, 413, and 416 each coordinate [4Fe-4S] cluster.

It belongs to the aconitase/IPM isomerase family. LeuC type 1 subfamily. As to quaternary structure, heterodimer of LeuC and LeuD. The cofactor is [4Fe-4S] cluster.

The enzyme catalyses (2R,3S)-3-isopropylmalate = (2S)-2-isopropylmalate. It functions in the pathway amino-acid biosynthesis; L-leucine biosynthesis; L-leucine from 3-methyl-2-oxobutanoate: step 2/4. In terms of biological role, catalyzes the isomerization between 2-isopropylmalate and 3-isopropylmalate, via the formation of 2-isopropylmaleate. This Pseudomonas putida (strain W619) protein is 3-isopropylmalate dehydratase large subunit.